Reading from the N-terminus, the 255-residue chain is Geranylgeranylglyceryl phosphate synthase (255 aa).

Residues Asp34 and Thr64 each contribute to the Mg(2+) site. Residues 182-188 (YLEAGSG), 213-214 (GG), and 235-236 (GN) contribute to the sn-glycerol 1-phosphate site.

It belongs to the GGGP/HepGP synthase family. Group II subfamily. The cofactor is Mg(2+).

Its subcellular location is the cytoplasm. The enzyme catalyses sn-glycerol 1-phosphate + (2E,6E,10E)-geranylgeranyl diphosphate = sn-3-O-(geranylgeranyl)glycerol 1-phosphate + diphosphate. The protein operates within membrane lipid metabolism; glycerophospholipid metabolism. Functionally, prenyltransferase that catalyzes the transfer of the geranylgeranyl moiety of geranylgeranyl diphosphate (GGPP) to the C3 hydroxyl of sn-glycerol-1-phosphate (G1P). This reaction is the first ether-bond-formation step in the biosynthesis of archaeal membrane lipids. In Saccharolobus islandicus (strain M.14.25 / Kamchatka #1) (Sulfolobus islandicus), this protein is Geranylgeranylglyceryl phosphate synthase.